The primary structure comprises 342 residues: MLTNPSQVIIRNQETLSQHRVLVLNHEADSLPKALLDVAQSVDALALDYHHYLHLAPQANAKLRCYFGHQLPHQDKYDTVIVYFPKAKPLAPYLFNLAAQHLVADGQLLVVGENKGGVKSLVKLLPKYFATGVKLDNARHCLLFGSSIIDTAPEIKLSDWTSQYQLATPQGNITICNLVGVFSEKHLDQGTELLLSHLPTLSGRVLDFGCGAGVIAAALLKAQPTLSLECIDINAMALASCELTLAANGMTAKVYPSDGLAQTSGKFDGIISNPPFHDGLASTTSIAQSFVADSAKQLQSKGIWQIVANRHLPYSDTIAAEFGQLTVPAENNKYKLYSFQQA.

The protein belongs to the methyltransferase superfamily. RsmC family. Monomer.

The protein resides in the cytoplasm. It catalyses the reaction guanosine(1207) in 16S rRNA + S-adenosyl-L-methionine = N(2)-methylguanosine(1207) in 16S rRNA + S-adenosyl-L-homocysteine + H(+). Its function is as follows. Specifically methylates the guanine in position 1207 of 16S rRNA in the 30S particle. The protein is Ribosomal RNA small subunit methyltransferase C of Shewanella sp. (strain MR-7).